We begin with the raw amino-acid sequence, 236 residues long: Small ribosomal subunit protein uS2c (236 aa).

This sequence belongs to the universal ribosomal protein uS2 family.

The protein localises to the plastid. Its subcellular location is the chloroplast. The chain is Small ribosomal subunit protein uS2c (rps2) from Morus indica (Mulberry).